The chain runs to 223 residues: Deoxyribose-phosphate aldolase (223 aa).

The active-site Proton donor/acceptor is Asp-92. The active-site Schiff-base intermediate with acetaldehyde is the Lys-154. Lys-182 (proton donor/acceptor) is an active-site residue.

The protein belongs to the DeoC/FbaB aldolase family. DeoC type 1 subfamily.

It localises to the cytoplasm. The enzyme catalyses 2-deoxy-D-ribose 5-phosphate = D-glyceraldehyde 3-phosphate + acetaldehyde. The protein operates within carbohydrate degradation; 2-deoxy-D-ribose 1-phosphate degradation; D-glyceraldehyde 3-phosphate and acetaldehyde from 2-deoxy-alpha-D-ribose 1-phosphate: step 2/2. In terms of biological role, catalyzes a reversible aldol reaction between acetaldehyde and D-glyceraldehyde 3-phosphate to generate 2-deoxy-D-ribose 5-phosphate. In Haemophilus influenzae (strain PittEE), this protein is Deoxyribose-phosphate aldolase.